The sequence spans 294 residues: Flavin-dependent thymidylate synthase (294 aa).

Residues 27–250 (GFIRVIDYMG…PFTYEAFEEY (224 aa)) form the ThyX domain. Residues Thr-73, 96–98 (RHR), and Glu-104 contribute to the FAD site. DUMP contacts are provided by residues 93 to 96 (QWIR), 104 to 108 (EYSAR), and Arg-189. Positions 96–106 (RHRTASVNEYS) match the ThyX motif motif. FAD-binding positions include 205 to 207 (NLH) and His-211. Arg-216 is a dUMP binding site. Arg-216 acts as the Involved in ionization of N3 of dUMP, leading to its activation in catalysis.

It belongs to the thymidylate synthase ThyX family. In terms of assembly, homotetramer. Requires FAD as cofactor.

The enzyme catalyses dUMP + (6R)-5,10-methylene-5,6,7,8-tetrahydrofolate + NADPH + H(+) = dTMP + (6S)-5,6,7,8-tetrahydrofolate + NADP(+). It functions in the pathway pyrimidine metabolism; dTTP biosynthesis. In terms of biological role, catalyzes the reductive methylation of 2'-deoxyuridine-5'-monophosphate (dUMP) to 2'-deoxythymidine-5'-monophosphate (dTMP) while utilizing 5,10-methylenetetrahydrofolate (mTHF) as the methyl donor, and NADPH and FADH(2) as the reductant. This is Flavin-dependent thymidylate synthase from Rickettsia prowazekii (strain Madrid E).